Reading from the N-terminus, the 245-residue chain is Orotidine 5'-phosphate decarboxylase (245 aa).

Residues D22, K44, 71–80 (DLKFHDIPNT), T131, R192, Q201, G221, and R222 contribute to the substrate site. The Proton donor role is filled by K73.

It belongs to the OMP decarboxylase family. Type 1 subfamily. Homodimer.

The catalysed reaction is orotidine 5'-phosphate + H(+) = UMP + CO2. It participates in pyrimidine metabolism; UMP biosynthesis via de novo pathway; UMP from orotate: step 2/2. Catalyzes the decarboxylation of orotidine 5'-monophosphate (OMP) to uridine 5'-monophosphate (UMP). The polypeptide is Orotidine 5'-phosphate decarboxylase (Salmonella paratyphi A (strain ATCC 9150 / SARB42)).